Here is a 436-residue protein sequence, read N- to C-terminus: Trigger factor (436 aa).

The PPIase FKBP-type domain occupies 163-248 (GDTVNIDFDG…VNEIKYKDVP (86 aa)).

Belongs to the FKBP-type PPIase family. Tig subfamily.

It localises to the cytoplasm. It carries out the reaction [protein]-peptidylproline (omega=180) = [protein]-peptidylproline (omega=0). Involved in protein export. Acts as a chaperone by maintaining the newly synthesized protein in an open conformation. Functions as a peptidyl-prolyl cis-trans isomerase. The polypeptide is Trigger factor (Staphylococcus saprophyticus subsp. saprophyticus (strain ATCC 15305 / DSM 20229 / NCIMB 8711 / NCTC 7292 / S-41)).